We begin with the raw amino-acid sequence, 374 residues long: Polar flagellin E (374 aa).

Residues 102–126 (SHEQDDRKSLQQEVIALQDELDRVA) are a coiled coil.

This sequence belongs to the bacterial flagellin family. Heteromer of multiple flagellin subunits including FlaA, FlaB/D, FlaC, FlaE and FlaF.

It localises to the secreted. The protein resides in the bacterial flagellum. Flagellin is the subunit protein which polymerizes to form the filaments of bacterial flagella. This chain is Polar flagellin E (flaE), found in Vibrio parahaemolyticus serotype O3:K6 (strain RIMD 2210633).